The chain runs to 407 residues: tRNA (uracil(54)-C(5))-methyltransferase (407 aa).

[4Fe-4S] cluster-binding residues include Cys61, Cys67, Cys70, and Cys137. Residues Gln253, Tyr279, Thr284, 300–301 (DS), Asp327, and Asp341 contribute to the S-adenosyl-L-methionine site. The active-site Nucleophile is Cys368. Glu400 (proton acceptor) is an active-site residue.

It belongs to the class I-like SAM-binding methyltransferase superfamily. RNA M5U methyltransferase family.

It carries out the reaction uridine(54) in tRNA + S-adenosyl-L-methionine = 5-methyluridine(54) in tRNA + S-adenosyl-L-homocysteine + H(+). Its function is as follows. Catalyzes the formation of 5-methyl-uridine at position 54 (m5U54) in tRNA. The protein is tRNA (uracil(54)-C(5))-methyltransferase of Pyrococcus horikoshii (strain ATCC 700860 / DSM 12428 / JCM 9974 / NBRC 100139 / OT-3).